A 752-amino-acid polypeptide reads, in one-letter code: Exocyst complex component EXO84B (752 aa).

Disordered regions lie at residues 511 to 532 and 724 to 752; these read QTGQRTDDLRRPLDRQNRNPEQ and TKGNNGDVHSPTASVSAQSVSSARSHGSY. Positions 515 to 532 are enriched in basic and acidic residues; sequence RTDDLRRPLDRQNRNPEQ. Residues 733–752 are compositionally biased toward low complexity; that stretch reads SPTASVSAQSVSSARSHGSY.

Belongs to the EXO84 family. As to quaternary structure, the exocyst complex is composed of SEC3, SEC5, SEC6, SEC8, SEC10, EXO70A1 and EXO84B. Interacts with SEC6, SEC10, SEC15B and EXO70A1. Interacts with EXO70B1. Binds directly to B1L.

It localises to the cytoplasm. It is found in the cytosol. The protein resides in the perinuclear region. The protein localises to the cytoskeleton. Its subcellular location is the phragmoplast. It localises to the secreted. It is found in the cell wall. The protein resides in the cell membrane. Functionally, component of the exocyst complex involved in the docking of exocytic vesicles with fusion sites on the plasma membrane during regulated or polarized secretion. Involved in polarized cell growth and organ morphogenesis. During cytokinesis, involved in cell plate initiation, cell plate maturation and formation of new primary cell wall. Probable component of an exocyst subcomplex specifically involved in autophagy-related, Golgi-independent membrane traffic to the vacuole. Regulates autophagosome formation and autophagy-related Golgi-independent import into the vacuole. Mediates ABCG36/PEN3 outer-membrane polarity at the periphery of lateral root cap and root epidermal cells. The polypeptide is Exocyst complex component EXO84B (Arabidopsis thaliana (Mouse-ear cress)).